A 404-amino-acid polypeptide reads, in one-letter code: Cysteine desulfurase IscS (404 aa).

Pyridoxal 5'-phosphate is bound by residues 75 to 76, N155, Q183, and 203 to 205; these read AT and SGH. K206 bears the N6-(pyridoxal phosphate)lysine mark. A pyridoxal 5'-phosphate-binding site is contributed by T243. Residue C328 is the Cysteine persulfide intermediate of the active site. C328 is a [2Fe-2S] cluster binding site.

Belongs to the class-V pyridoxal-phosphate-dependent aminotransferase family. NifS/IscS subfamily. In terms of assembly, homodimer. Forms a heterotetramer with IscU, interacts with other sulfur acceptors. Pyridoxal 5'-phosphate is required as a cofactor.

It is found in the cytoplasm. The enzyme catalyses (sulfur carrier)-H + L-cysteine = (sulfur carrier)-SH + L-alanine. Its pathway is cofactor biosynthesis; iron-sulfur cluster biosynthesis. Its function is as follows. Master enzyme that delivers sulfur to a number of partners involved in Fe-S cluster assembly, tRNA modification or cofactor biosynthesis. Catalyzes the removal of elemental sulfur atoms from cysteine to produce alanine. Functions as a sulfur delivery protein for Fe-S cluster synthesis onto IscU, an Fe-S scaffold assembly protein, as well as other S acceptor proteins. This chain is Cysteine desulfurase IscS, found in Shewanella frigidimarina (strain NCIMB 400).